A 2110-amino-acid chain; its full sequence is Protein Ycf2 (2110 aa).

The segment at 190 to 209 (DSSQLKGSSDQSRDPLDSIS) is disordered. ATP is bound at residue 1442 to 1449 (GSIGTGRS).

It belongs to the Ycf2 family.

Its subcellular location is the plastid. It is found in the chloroplast stroma. Its function is as follows. Probable ATPase of unknown function. Its presence in a non-photosynthetic plant (Epifagus virginiana) and experiments in tobacco indicate that it has an essential function which is probably not related to photosynthesis. This is Protein Ycf2 from Panax ginseng (Korean ginseng).